The primary structure comprises 310 residues: Putative dihydroorotate dehydrogenase A (fumarate) (310 aa).

Substrate contacts are provided by residues Lys45, Asn69–Leu73, and Asn128. Residue Lys45–Thr46 coordinates FMN. Asn128 contributes to the FMN binding site. Residue Cys131 is the Nucleophile of the active site. The FMN site is built by Lys165 and Val193. Asn194 to Ser195 provides a ligand contact to substrate. Residues Gly220, Gly248–Gly249, and Gly270–Thr271 contribute to the FMN site.

Belongs to the dihydroorotate dehydrogenase family. Type 1 subfamily. Homodimer. FMN is required as a cofactor.

It is found in the cytoplasm. It carries out the reaction (S)-dihydroorotate + fumarate = orotate + succinate. The protein operates within pyrimidine metabolism; UMP biosynthesis via de novo pathway. Its function is as follows. Catalyzes the conversion of dihydroorotate to orotate with fumarate as the electron acceptor. The chain is Putative dihydroorotate dehydrogenase A (fumarate) (pyrD) from Streptococcus agalactiae serotype Ia (strain ATCC 27591 / A909 / CDC SS700).